Consider the following 225-residue polypeptide: Gene 30 protein (225 aa).

The segment at R48–A73 is disordered. The segment covering E51–A73 has biased composition (basic and acidic residues).

Functionally, essential for DNA synthesis. This Bacillus phage SP01 (Bacteriophage SP01) protein is Gene 30 protein (30).